We begin with the raw amino-acid sequence, 784 residues long: Homeobox-leucine zipper protein ROC2 (784 aa).

Positions 60-113 (AESGDNMIRSRASDPLGGDEFESKSGSENVDGVSVDDQDPNQRPRKKRYHRHTQ) are disordered. Over residues 102–113 (RPRKKRYHRHTQ) the composition is skewed to basic residues. Residues 104–163 (RKKRYHRHTQHQIQEMEAFFKECPHPDDKQRKELSRELGLEPLQVKFWFQNKRTQMKNQH) constitute a DNA-binding region (homeobox). The stretch at 158 to 234 (QMKNQHERHE…DRISAIAAKY (77 aa)) forms a coiled coil. Residues 286–523 (SEVDKPMIVE…LDRQCERLAS (238 aa)) form the START domain.

Belongs to the HD-ZIP homeobox family. Class IV subfamily.

It localises to the nucleus. Its function is as follows. Probable transcription factor. The sequence is that of Homeobox-leucine zipper protein ROC2 (ROC2) from Oryza sativa subsp. japonica (Rice).